We begin with the raw amino-acid sequence, 191 residues long: MKKQLLAALIGGSLLAPMAASAADYVIDREGAHASITFKVSHLGYSYVVGRFNDFSGDFSYDAKNPTAAKVNVKVNTLSVDSNHAERDKHIRSGDFLNTAKFAEATFVSTSVEDKGNGDMVITGNFTLNGVTKPLAIQAHAVGEGQDPWGGYRAGFTGTTTFAMKDYGIKMDLGPASANVELDLVVEGVRK.

Residues 1–22 (MKKQLLAALIGGSLLAPMAASA) form the signal peptide.

Belongs to the UPF0312 family. Type 1 subfamily.

Its subcellular location is the periplasm. This is UPF0312 protein Shewana3_1179 from Shewanella sp. (strain ANA-3).